The sequence spans 399 residues: Oligoribonuclease NrnB (399 aa).

Requires Mn(2+) as cofactor. Co(2+) is required as a cofactor. It depends on Mg(2+) as a cofactor.

It is found in the cytoplasm. Functionally, degrades RNA oligonucleotides with a length of 5 nucleotides in a 3'- to 5'-direction. Less active on shorter RNA oligonucleotides and on those with a length of 24 nucleotides. Prefers RNA oligonucleotides containing adenines rather than cytosines. The sequence is that of Oligoribonuclease NrnB (nrnB) from Bacillus subtilis (strain 168).